The following is a 166-amino-acid chain: Phosphopantetheine adenylyltransferase (166 aa).

Ser11 provides a ligand contact to substrate. Residues 11–12 (SF) and His19 contribute to the ATP site. Lys43, Val80, and Arg94 together coordinate substrate. Residues 95–97 (GLR), Glu105, and 130–136 (VRTVTAT) each bind ATP.

It belongs to the bacterial CoaD family. Homohexamer. The cofactor is Mg(2+).

The protein localises to the cytoplasm. It catalyses the reaction (R)-4'-phosphopantetheine + ATP + H(+) = 3'-dephospho-CoA + diphosphate. The protein operates within cofactor biosynthesis; coenzyme A biosynthesis; CoA from (R)-pantothenate: step 4/5. Its function is as follows. Reversibly transfers an adenylyl group from ATP to 4'-phosphopantetheine, yielding dephospho-CoA (dPCoA) and pyrophosphate. The protein is Phosphopantetheine adenylyltransferase of Chelativorans sp. (strain BNC1).